Here is a 132-residue protein sequence, read N- to C-terminus: L-ectoine synthase (132 aa).

This sequence belongs to the ectoine synthase family.

It catalyses the reaction (2S)-4-acetamido-2-aminobutanoate = L-ectoine + H2O. It functions in the pathway amine and polyamine biosynthesis; ectoine biosynthesis; L-ectoine from L-aspartate 4-semialdehyde: step 3/3. In terms of biological role, catalyzes the circularization of gamma-N-acetyl-alpha,gamma-diaminobutyric acid (ADABA) to ectoine (1,4,5,6-tetrahydro-2-methyl-4-pyrimidine carboxylic acid), which is an excellent osmoprotectant. The chain is L-ectoine synthase from Bordetella avium (strain 197N).